The chain runs to 315 residues: Small ribosomal subunit protein uS2 (315 aa).

Residues 250-315 (LLEQGDAAKA…TESEKAPVSE (66 aa)) form a disordered region. Basic and acidic residues-rich tracts occupy residues 272–282 (VSAKNEAKSED) and 297–315 (TEAK…PVSE).

Belongs to the universal ribosomal protein uS2 family.

The protein is Small ribosomal subunit protein uS2 of Clavibacter michiganensis subsp. michiganensis (strain NCPPB 382).